Here is a 493-residue protein sequence, read N- to C-terminus: Inosine-5'-monophosphate dehydrogenase (493 aa).

CBS domains are found at residues 97–155 (VIID…NAPI) and 159–219 (MTSE…AKDE). Residues aspartate 253 and 303–305 (GIG) contribute to the NAD(+) site. The K(+) site is built by glycine 305 and glycine 307. Serine 308 is an IMP binding site. Cysteine 310 is a binding site for K(+). Cysteine 310 acts as the Thioimidate intermediate in catalysis. Residues 343-345 (DGG), 366-367 (GS), and 390-394 (YRGMG) contribute to the IMP site. Arginine 406 serves as the catalytic Proton acceptor. An IMP-binding site is contributed by glutamate 421. Residues glutamate 475, serine 476, and histidine 477 each contribute to the K(+) site.

Belongs to the IMPDH/GMPR family. Homotetramer. Requires K(+) as cofactor.

It carries out the reaction IMP + NAD(+) + H2O = XMP + NADH + H(+). It participates in purine metabolism; XMP biosynthesis via de novo pathway; XMP from IMP: step 1/1. Its activity is regulated as follows. Mycophenolic acid (MPA) is a non-competitive inhibitor that prevents formation of the closed enzyme conformation by binding to the same site as the amobile flap. In contrast, mizoribine monophosphate (MZP) is a competitive inhibitor that induces the closed conformation. MPA is a potent inhibitor of mammalian IMPDHs but a poor inhibitor of the bacterial enzymes. MZP is a more potent inhibitor of bacterial IMPDH. In terms of biological role, catalyzes the conversion of inosine 5'-phosphate (IMP) to xanthosine 5'-phosphate (XMP), the first committed and rate-limiting step in the de novo synthesis of guanine nucleotides, and therefore plays an important role in the regulation of cell growth. The polypeptide is Inosine-5'-monophosphate dehydrogenase (Streptococcus pyogenes serotype M3 (strain ATCC BAA-595 / MGAS315)).